The chain runs to 169 residues: UPF0303 protein BruAb1_1406 (169 aa).

Belongs to the UPF0303 family.

The sequence is that of UPF0303 protein BruAb1_1406 from Brucella abortus biovar 1 (strain 9-941).